Here is a 273-residue protein sequence, read N- to C-terminus: 1,4-dihydroxy-2-naphthoyl-CoA synthase (273 aa).

Residues Arg34, 73–77 (SGGDQ), Tyr85, 117–121 (YAVGG), Thr143, Ser149, Tyr246, and Lys261 contribute to the substrate site. Hydrogencarbonate is bound at residue 142–144 (QTG). The segment covering 254 to 265 (GRDAFKEKRDPD) has biased composition (basic and acidic residues). Positions 254–273 (GRDAFKEKRDPDFDQFPKFP) are disordered.

The protein belongs to the enoyl-CoA hydratase/isomerase family. MenB subfamily. The cofactor is hydrogencarbonate.

It catalyses the reaction 2-succinylbenzoyl-CoA + H(+) = 1,4-dihydroxy-2-naphthoyl-CoA + H2O. The protein operates within quinol/quinone metabolism; 1,4-dihydroxy-2-naphthoate biosynthesis; 1,4-dihydroxy-2-naphthoate from chorismate: step 6/7. It functions in the pathway quinol/quinone metabolism; menaquinone biosynthesis. Converts o-succinylbenzoyl-CoA (OSB-CoA) to 1,4-dihydroxy-2-naphthoyl-CoA (DHNA-CoA). In Staphylococcus aureus (strain MRSA252), this protein is 1,4-dihydroxy-2-naphthoyl-CoA synthase.